Here is a 196-residue protein sequence, read N- to C-terminus: Putative acetyltransferase YJL218W (196 aa).

Residue N84 participates in acetyl-CoA binding. H114 serves as the catalytic Proton donor/acceptor. Residues G141, A159, 164-165, K179, and R182 each bind acetyl-CoA; that span reads IR.

This sequence belongs to the transferase hexapeptide repeat family. As to quaternary structure, homodimer.

This chain is Putative acetyltransferase YJL218W, found in Saccharomyces cerevisiae (strain ATCC 204508 / S288c) (Baker's yeast).